The chain runs to 177 residues: Peptidyl-tRNA hydrolase (177 aa).

Tyrosine 14 provides a ligand contact to tRNA. Histidine 19 functions as the Proton acceptor in the catalytic mechanism. Phenylalanine 64, asparagine 66, and asparagine 112 together coordinate tRNA.

Belongs to the PTH family. Monomer.

It localises to the cytoplasm. The enzyme catalyses an N-acyl-L-alpha-aminoacyl-tRNA + H2O = an N-acyl-L-amino acid + a tRNA + H(+). Its function is as follows. Hydrolyzes ribosome-free peptidyl-tRNAs (with 1 or more amino acids incorporated), which drop off the ribosome during protein synthesis, or as a result of ribosome stalling. Functionally, catalyzes the release of premature peptidyl moieties from peptidyl-tRNA molecules trapped in stalled 50S ribosomal subunits, and thus maintains levels of free tRNAs and 50S ribosomes. This is Peptidyl-tRNA hydrolase from Latilactobacillus sakei (Lactobacillus sakei).